A 507-amino-acid polypeptide reads, in one-letter code: ATP synthase subunit alpha, chloroplastic (507 aa).

Position 170–177 (170–177) interacts with ATP; it reads GDRQTGKT.

Belongs to the ATPase alpha/beta chains family. F-type ATPases have 2 components, CF(1) - the catalytic core - and CF(0) - the membrane proton channel. CF(1) has five subunits: alpha(3), beta(3), gamma(1), delta(1), epsilon(1). CF(0) has four main subunits: a, b, b' and c.

The protein resides in the plastid. The protein localises to the chloroplast thylakoid membrane. The catalysed reaction is ATP + H2O + 4 H(+)(in) = ADP + phosphate + 5 H(+)(out). Functionally, produces ATP from ADP in the presence of a proton gradient across the membrane. The alpha chain is a regulatory subunit. The chain is ATP synthase subunit alpha, chloroplastic from Nandina domestica (Heavenly bamboo).